Reading from the N-terminus, the 58-residue chain is UPF0391 membrane protein COXBURSA331_A2131 (58 aa).

Helical transmembrane passes span 3 to 23 (FWVLIFFIIAVIAALFGFTGI) and 30 to 50 (IAKILFFIFLVLFVISLIAML).

Belongs to the UPF0391 family.

It is found in the cell membrane. This chain is UPF0391 membrane protein COXBURSA331_A2131, found in Coxiella burnetii (strain RSA 331 / Henzerling II).